Consider the following 131-residue polypeptide: UPF0102 protein YraN (131 aa).

Positions 1–20 are disordered; sequence MATVPTRSGSPRQLTTKQTG.

It belongs to the UPF0102 family.

The protein is UPF0102 protein YraN of Escherichia coli O139:H28 (strain E24377A / ETEC).